We begin with the raw amino-acid sequence, 92 residues long: MDLFTIFAMKLLTYNDFFDSVSSALTSWTGKLQGLGIAVIIFCVCIIAFMFMFGEGPSRTAKKWLLYIVVGGVLLWGAGTFASTVQGVTAGF.

Transmembrane regions (helical) follow at residues 34–54 and 65–85; these read GLGIAVIIFCVCIIAFMFMFG and LLYIVVGGVLLWGAGTFASTV.

Its subcellular location is the cell membrane. This is an uncharacterized protein from Bacillus anthracis.